Consider the following 84-residue polypeptide: Translation initiation factor IF-1, chloroplastic (84 aa).

The S1-like domain occupies 1-72 (MKKQNLVEME…SKGRITYRLR (72 aa)).

It belongs to the IF-1 family. As to quaternary structure, component of the 30S ribosomal translation pre-initiation complex which assembles on the 30S ribosome in the order IF-2 and IF-3, IF-1 and N-formylmethionyl-tRNA(fMet); mRNA recruitment can occur at any time during PIC assembly.

It is found in the plastid. Its subcellular location is the chloroplast. In terms of biological role, one of the essential components for the initiation of protein synthesis. Stabilizes the binding of IF-2 and IF-3 on the 30S subunit to which N-formylmethionyl-tRNA(fMet) subsequently binds. Helps modulate mRNA selection, yielding the 30S pre-initiation complex (PIC). Upon addition of the 50S ribosomal subunit IF-1, IF-2 and IF-3 are released leaving the mature 70S translation initiation complex. This Spirogyra maxima (Green alga) protein is Translation initiation factor IF-1, chloroplastic.